The following is a 313-amino-acid chain: ADP-L-glycero-D-manno-heptose-6-epimerase (313 aa).

NADP(+)-binding positions include 10–11 (MI), 31–32 (DN), K38, K53, 75–79 (EGACS), and N92. Residue Y139 is the Proton acceptor of the active site. K143 is a binding site for NADP(+). Substrate is bound at residue N174. Residues V175 and K183 each contribute to the NADP(+) site. The active-site Proton acceptor is the K183. Substrate contacts are provided by residues S185, H192, 206–209 (FEGS), R214, and Y277.

This sequence belongs to the NAD(P)-dependent epimerase/dehydratase family. HldD subfamily. In terms of assembly, homopentamer. NADP(+) is required as a cofactor.

The enzyme catalyses ADP-D-glycero-beta-D-manno-heptose = ADP-L-glycero-beta-D-manno-heptose. It participates in nucleotide-sugar biosynthesis; ADP-L-glycero-beta-D-manno-heptose biosynthesis; ADP-L-glycero-beta-D-manno-heptose from D-glycero-beta-D-manno-heptose 7-phosphate: step 4/4. In terms of biological role, catalyzes the interconversion between ADP-D-glycero-beta-D-manno-heptose and ADP-L-glycero-beta-D-manno-heptose via an epimerization at carbon 6 of the heptose. This chain is ADP-L-glycero-D-manno-heptose-6-epimerase, found in Aliivibrio fischeri (strain MJ11) (Vibrio fischeri).